Consider the following 144-residue polypeptide: Large ribosomal subunit protein uL15 (144 aa).

A disordered region spans residues 1–51 (MKLNELKPATGSRSKRLRKGRGLSSGHGFTSGRGTKGQKAHGKTRLGFEGG). Gly residues predominate over residues 23 to 35 (LSSGHGFTSGRGT).

The protein belongs to the universal ribosomal protein uL15 family. As to quaternary structure, part of the 50S ribosomal subunit.

Binds to the 23S rRNA. This is Large ribosomal subunit protein uL15 from Limosilactobacillus reuteri (strain DSM 20016) (Lactobacillus reuteri).